The primary structure comprises 941 residues: PHD finger protein 14 (941 aa).

The tract at residues 22-295 is disordered; the sequence is DYDSSDDSDF…LSQSKSNEDS (274 aa). S26 and S29 each carry phosphoserine. Over residues 36 to 47 the composition is skewed to low complexity; the sequence is ASDSEGSGNGSE. Residues 60–72 are compositionally biased toward acidic residues; that stretch reads DSEENILEEELNE. Composition is skewed to basic and acidic residues over residues 74–85, 94–109, and 116–132; these read IQVKEEQLKNST, QLIKMEKKEEEENGER, and KEKEKEKEREKDKEKAT. S84 carries the post-translational modification Phosphoserine. Residues 133-166 are compositionally biased toward low complexity; that stretch reads VSDSAAASAAGTTPATSPPAVTSPSVPTTTTTTT. Position 189 is a phosphoserine (S189). Acidic residues-rich tracts occupy residues 194–205 and 226–249; these read NAMDDYDSEDDN and DGDNEDDDDEGSGSEEDENDEGND. Y199 is modified (phosphotyrosine). S201 bears the Phosphoserine mark. The residue at position 280 (T280) is a Phosphothreonine. Positions 281–290 are enriched in polar residues; it reads NDSLTLSQSK. Phosphoserine occurs at positions 283, 287, 291, 295, and 301. A PHD-type 1 zinc finger spans residues 312–373; it reads ILICCVCLGD…PWFCDACKCG (62 aa). 6 residues coordinate Zn(2+): C315, C318, C332, C335, H340, and C343. Phosphoserine is present on S352. 14 residues coordinate Zn(2+): C367, C370, C378, C381, H398, C401, C434, C437, C451, C456, H461, C464, C488, and H491. The C2HC pre-PHD-type zinc finger occupies 375-408; that stretch reads SPSCELCPNQDGIFKETDAGRWVHIVCALYVPGV. The PHD-type 2 zinc-finger motif lies at 432–492; the sequence is KECSFCEDPR…PFFAYCKQHA (61 aa). Phosphoserine is present on S523. The stretch at 623-671 forms a coiled coil; the sequence is MIQIQENMAEQKNIKDKLENEQEKLHVEYNKLCESLEELQNLNGKLRSE. The PHD-type 3 zinc-finger motif lies at 718–772; it reads LYSCGICKKNHDQHLLLLCDTCKLHYHLGCLDPPLTRMPRKTKNSYWQCSECDQA. Zn(2+)-binding residues include C721, C724, C736, C739, H744, C747, C766, and C769. A phosphoserine mark is found at S774, S775, and S828. The interval 804–855 is disordered; that stretch reads VPQDVPPEPKKIPIRNTRTRGRKRSFVPEEEKHEERVPRERRQRQSVLQKKP. The segment covering 829–843 has biased composition (basic and acidic residues); the sequence is FVPEEEKHEERVPRE. Residues 861 to 914 form a PHD-type 4 zinc finger; that stretch reads RTECSTCKGTGDNENLVRCDECRLCYHFGCLDPPLKKSPKQTGYGWICQECDSS. Zn(2+) is bound by residues C864, C867, C879, C882, H887, C890, C908, and C911. Residues 912 to 941 are disordered; it reads DSSSSKEDENEAEKKNASQELSMEQKTPKK. A compositionally biased stretch (basic and acidic residues) spans 915–928; it reads SSKEDENEAEKKNA. Over residues 930–941 the composition is skewed to polar residues; the sequence is QELSMEQKTPKK.

In terms of tissue distribution, high levels detected in testis, lung and spleen and low levels in muscle, heart, intestine and kidney (at protein level). Widely expressed in adult with increased levels in intestine, colon and lung.

Its subcellular location is the nucleus. It is found in the chromosome. The protein localises to the cytoplasm. Its function is as follows. Histone-binding protein. Binds preferentially to unmodified histone H3 but can also bind to a lesser extent to histone H3 trimethylated at 'Lys-9' (H3K9me3) as well as to histone H3 monomethylated at 'Lys-27' (H3K27ac) and trimethylated at 'Lys-27' (H3K27me3). Represses PDGFRA expression, thus playing a role in regulation of mesenchymal cell proliferation. Suppresses the expression of CDKN1A/p21 by reducing the level of trimethylation of histone H3 'Lys-4', leading to enhanced proliferation of germinal center B cells. In Mus musculus (Mouse), this protein is PHD finger protein 14 (Phf14).